The following is a 358-amino-acid chain: 4-hydroxy-3-methylbut-2-en-1-yl diphosphate synthase (flavodoxin) (358 aa).

[4Fe-4S] cluster is bound by residues C265, C268, C300, and E307.

Belongs to the IspG family. Requires [4Fe-4S] cluster as cofactor.

The catalysed reaction is (2E)-4-hydroxy-3-methylbut-2-enyl diphosphate + oxidized [flavodoxin] + H2O + 2 H(+) = 2-C-methyl-D-erythritol 2,4-cyclic diphosphate + reduced [flavodoxin]. It participates in isoprenoid biosynthesis; isopentenyl diphosphate biosynthesis via DXP pathway; isopentenyl diphosphate from 1-deoxy-D-xylulose 5-phosphate: step 5/6. Functionally, converts 2C-methyl-D-erythritol 2,4-cyclodiphosphate (ME-2,4cPP) into 1-hydroxy-2-methyl-2-(E)-butenyl 4-diphosphate. The polypeptide is 4-hydroxy-3-methylbut-2-en-1-yl diphosphate synthase (flavodoxin) (Maridesulfovibrio salexigens (strain ATCC 14822 / DSM 2638 / NCIMB 8403 / VKM B-1763) (Desulfovibrio salexigens)).